A 98-amino-acid polypeptide reads, in one-letter code: NADH-ubiquinone oxidoreductase chain 4L (98 aa).

The next 3 membrane-spanning stretches (helical) occupy residues 1–21, 29–49, and 61–81; these read MTMV…GLLM, SLLC…ITIL, and IILL…LVMV.

The protein belongs to the complex I subunit 4L family. In terms of assembly, core subunit of respiratory chain NADH dehydrogenase (Complex I) which is composed of 45 different subunits.

It localises to the mitochondrion inner membrane. It carries out the reaction a ubiquinone + NADH + 5 H(+)(in) = a ubiquinol + NAD(+) + 4 H(+)(out). Functionally, core subunit of the mitochondrial membrane respiratory chain NADH dehydrogenase (Complex I) which catalyzes electron transfer from NADH through the respiratory chain, using ubiquinone as an electron acceptor. Part of the enzyme membrane arm which is embedded in the lipid bilayer and involved in proton translocation. The sequence is that of NADH-ubiquinone oxidoreductase chain 4L (MT-ND4L) from Ommatophoca rossii (Ross seal).